The following is a 304-amino-acid chain: MTRQMILAVGQQGPIARAETREQVVVRLLDMLTKAASRGANFIVFPELALTTFFPRWHFTDEAELDSFYETEMPGPVVRPLFEKAAELGIGFNLGYAELVVEGGVKRRFNTSILVDKSGKIVGKYRKIHLPGHKEYEAYRPFQHLEKRYFEPGDLGFPVYDVDAAKMGMFICNDRRWPEAWRVMGLRGAEIICGGYNTPTHNPPVPQHDHLTSFHHLLSMQAGSYQNGAWSAAAGKVGMEENCMLLGHSCIVAPTGEIVALTTTLEDEVITAAVDLDRCRELREHIFNFKQHRQPQHYGLIAEL.

A CN hydrolase domain is found at Met5–Leu276. Residues Glu47, Lys127, and Cys172 contribute to the active site.

The catalysed reaction is an N-carbamoyl-D-amino acid + H2O + 2 H(+) = a D-alpha-amino acid + NH4(+) + CO2. Its function is as follows. The enzyme catalyzes the hydrolysis of N-carbamoyl-D-amino acids to the corresponding which are useful intermediates in the preparation of beta-lactam antibiotics. Industrial production of beta-lactam antibiotics is now being developed using this enzyme. This Agrobacterium sp. (strain KNK712) protein is N-carbamoyl-D-amino acid hydrolase.